The following is a 133-amino-acid chain: Fatty acid-binding protein, heart (133 aa).

An N-acetylalanine modification is found at Ala2. Thr8 carries the post-translational modification Phosphothreonine. Tyr20 bears the Phosphotyrosine; by Tyr-kinases mark. Ser23 is modified (phosphoserine). Thr30 is modified (phosphothreonine). Phosphoserine is present on Ser83. 127 to 129 contributes to the (9Z)-octadecenoate binding site; sequence RTY. 127–129 is a hexadecanoate binding site; the sequence is RTY. 127–129 is a binding site for octadecanoate; the sequence is RTY.

Belongs to the calycin superfamily. Fatty-acid binding protein (FABP) family.

The protein localises to the cytoplasm. Its function is as follows. FABPs are thought to play a role in the intracellular transport of long-chain fatty acids and their acyl-CoA esters. This is Fatty acid-binding protein, heart (Fabp3) from Mus musculus (Mouse).